A 65-amino-acid polypeptide reads, in one-letter code: EHGYLLDKYTGCKVWCVINNESCNGECNKRRGGYYGYCYFWKLACYCQGARKSELWNYKTNKCKS.

Glutamate 1 bears the Pyrrolidone carboxylic acid (Glu); partial mark. Positions 1–64 constitute an LCN-type CS-alpha/beta domain; that stretch reads EHGYLLDKYT…LWNYKTNKCK (64 aa). Disulfide bonds link cysteine 12–cysteine 63, cysteine 16–cysteine 38, cysteine 23–cysteine 45, and cysteine 27–cysteine 47. Serine 65 carries the serine amide modification.

It belongs to the long (4 C-C) scorpion toxin superfamily. Sodium channel inhibitor family. In terms of tissue distribution, expressed by the venom gland.

The protein resides in the secreted. Has a toxic effect on insects and mammals. On German cockroach larvae, it provokes contraction, paralysis and lethality. Intracerebroventricular injection into mice causes severe neurotoxic symptoms. It fully competes with the binding of the iodinated Css4 (AC P60266) on rat brain synaptosomes, with moderate affinity and in a concentration-dependent manner (EC(50)=25 nM). It may act on both site 3 and site 4 of voltage-gated sodium channels. The polypeptide is Beta-toxin Am IT (Androctonus mauritanicus mauritanicus (Scorpion)).